Consider the following 100-residue polypeptide: Putative PIN1-like protein (100 aa).

Over residues 1-15 (MADEEKLPPGWEKRM) the composition is skewed to basic and acidic residues. 2 disordered regions span residues 1-52 (MADE…QGEP) and 69-100 (LDLA…REGL). A WW domain is found at 5-38 (EKLPPGWEKRMSRPSGRGYYFNHITNPSQWERPS). Polar residues predominate over residues 27–44 (HITNPSQWERPSGNSSSG). The span at 87-100 (QRLHPEDQGRREGL) shows a compositional bias: basic and acidic residues.

This Homo sapiens (Human) protein is Putative PIN1-like protein (PIN1P1).